A 456-amino-acid chain; its full sequence is Equilibrative nucleoside transporter 1 (456 aa).

Topologically, residues 2 to 12 (TTSHQPQDRYK) are cytoplasmic. Residues 13–29 (AVWLIFFMLGLGTLLPW) traverse the membrane as a helical segment. Residues 30-82 (NFFMTATQYFTNRLDMSQNVSLVTAELSKDAQASAAPAAPLPERNSLSAIFNN) lie on the Extracellular side of the membrane. N-linked (GlcNAc...) asparagine glycosylation is present at N48. Residues 83–107 (VMTLCAMLPLLLFTYLNSFLHQRIP) form a helical membrane-spanning segment. The Cytoplasmic segment spans residues 108–111 (QSVR). A helical transmembrane segment spans residues 112–130 (ILGSLVAILLVFLITAILV). The Extracellular portion of the chain corresponds to 131 to 138 (KVQLDALP). Residues 139–157 (FFVITMIKIVLINSFGAIL) form a helical membrane-spanning segment. Residues 158–174 (QGSLFGLAGLLPASYTA) are Cytoplasmic-facing. A helical membrane pass occupies residues 175–199 (PIMSGQGLAGFFASVAMICAIASGS). Topologically, residues 200–206 (ELSESAF) are extracellular. Residues 207-227 (GYFITACAVIILTIICYLGLP) traverse the membrane as a helical segment. The Cytoplasmic segment spans residues 228–291 (RLEFYRYYQQ…IKAILKNISV (64 aa)). S254, S269, and S273 each carry phosphoserine. The segment covering 254 to 266 (SKGEEPRAGKEES) has biased composition (basic and acidic residues). Positions 254–276 (SKGEEPRAGKEESGVSVSNSQPT) are disordered. Residues 292 to 311 (LAFSVCFIFTITIGMFPAVT) traverse the membrane as a helical segment. Over 312 to 323 (VEVKSSIAGSST) the chain is Extracellular. A helical membrane pass occupies residues 324–342 (WERYFIPVSCFLTFNIFDW). The Cytoplasmic portion of the chain corresponds to 343–359 (LGRSLTAVFMWPGKDSR). Residues 360–378 (WLPSLVLARLVFVPLLLLC) form a helical membrane-spanning segment. The Extracellular portion of the chain corresponds to 379–393 (NIKPRRYLTVVFEHD). Residues 394–413 (AWFIFFMAAFAFSNGYLASL) form a helical membrane-spanning segment. The Cytoplasmic portion of the chain corresponds to 414–431 (CMCFGPKKVKPAEAETAG). The chain crosses the membrane as a helical span at residues 432–452 (AIMAFFLCLGLALGAVFSFLF). At 453 to 456 (RAIV) the chain is on the extracellular side.

This sequence belongs to the SLC29A/ENT transporter (TC 2.A.57) family. Identified in a complex with STOM. Post-translationally, glycosylated. As to expression, expressed in testis at the blood-testis barrier (at protein level). Detected in erythrocytes (at protein level). Expressed at relatively high levels in cerebral cortex, particularly the frontal and parietal lobes, and the thalamus and basal ganglia (at protein level). In the midbrain expressed at moderate levels, whereas in the other areas of the brainstem, namely medulla and pons, cerebellum and the hippocampus expressed at lower amounts when compared to the other brain regions (at protein level). Expressed in Langerhans cells and lymphocytes in the pancreas (at protein level). Expressed in kidney, in polarized renal epithelial cells. Expressed in adipose tissues. Expressed in placenta. Expressed in small intestine.

The protein resides in the basolateral cell membrane. Its subcellular location is the apical cell membrane. The protein localises to the cell membrane. It carries out the reaction adenosine(in) = adenosine(out). The catalysed reaction is guanosine(in) = guanosine(out). It catalyses the reaction inosine(in) = inosine(out). The enzyme catalyses uridine(out) = uridine(in). It carries out the reaction thymidine(in) = thymidine(out). The catalysed reaction is cytidine(in) = cytidine(out). It catalyses the reaction adenine(out) = adenine(in). The enzyme catalyses guanine(out) = guanine(in). It carries out the reaction thymine(out) = thymine(in). The catalysed reaction is uracil(in) = uracil(out). It catalyses the reaction hypoxanthine(out) = hypoxanthine(in). Transporter activity is sensitive to low concentrations of the inhibitor nitrobenzylmercaptopurine riboside (NBMPR). Inhibited by dilazep. Inhibited by dipyridamole. Inhibited by hypoxanthine. Inhibited by azidothymidine (AZT). Inhibited by dideoxycytidine (ddC). Inhibited by dideoxyinosine (ddI). Inhibited by draflazine. Inhibited by soluflazine. Inhibited by cladribine. Inhibited by capecitabine. Inhibited by clofarabine. Inhibited by ribavirin. Modestly inhibited by acyclovir. Modestly inhibited by 5-fluorouracil. Functionally, uniporter involved in the facilitative transport of nucleosides and nucleobases, and contributes to maintaining their cellular homeostasis. Functions as a Na(+)-independent transporter. Involved in the transport of nucleosides such as adenosine, guanosine, inosine, uridine, thymidine and cytidine. Also transports purine nucleobases (hypoxanthine, adenine, guanine) and pyrimidine nucleobases (thymine, uracil). Mediates basolateral nucleoside uptake into Sertoli cells, thereby regulating the transport of nucleosides in testis across the blood-testis barrier. Regulates inosine levels in brown adipocytes tissues (BAT) and extracellular inosine levels, which controls BAT-dependent energy expenditure. The polypeptide is Equilibrative nucleoside transporter 1 (Homo sapiens (Human)).